The chain runs to 710 residues: Integrator complex subunit 10 (710 aa).

Residues 366–393 (IHKKRKLAEGREKTMSSDDEDPSGKARS) form a disordered region. Over residues 372-381 (LAEGREKTMS) the composition is skewed to basic and acidic residues.

Belongs to the Integrator subunit 10 family. As to quaternary structure, component of the Integrator complex, composed of core subunits INTS1, INTS2, INTS3, INTS4, INTS5, INTS6, INTS7, INTS8, INTS9/RC74, INTS10, INTS11/CPSF3L, INTS12, INTS13, INTS14 and INTS15. The core complex associates with protein phosphatase 2A subunits PPP2CA and PPP2R1A, to form the Integrator-PP2A (INTAC) complex. INTS10 is part of the tail subcomplex, composed of INTS10, INTS13, INTS14 and INTS15.

It is found in the nucleus. Component of the integrator complex, a multiprotein complex that terminates RNA polymerase II (Pol II) transcription in the promoter-proximal region of genes. The integrator complex provides a quality checkpoint during transcription elongation by driving premature transcription termination of transcripts that are unfavorably configured for transcriptional elongation: the complex terminates transcription by (1) catalyzing dephosphorylation of the C-terminal domain (CTD) of Pol II subunit POLR2A/RPB1 and SUPT5H/SPT5, (2) degrading the exiting nascent RNA transcript via endonuclease activity and (3) promoting the release of Pol II from bound DNA. The integrator complex is also involved in terminating the synthesis of non-coding Pol II transcripts, such as enhancer RNAs (eRNAs), small nuclear RNAs (snRNAs), telomerase RNAs and long non-coding RNAs (lncRNAs). The polypeptide is Integrator complex subunit 10 (INTS10) (Gallus gallus (Chicken)).